The primary structure comprises 268 residues: Tryptophan synthase alpha chain (268 aa).

Residues E49 and D60 each act as proton acceptor in the active site.

The protein belongs to the TrpA family. Tetramer of two alpha and two beta chains.

The catalysed reaction is (1S,2R)-1-C-(indol-3-yl)glycerol 3-phosphate + L-serine = D-glyceraldehyde 3-phosphate + L-tryptophan + H2O. The protein operates within amino-acid biosynthesis; L-tryptophan biosynthesis; L-tryptophan from chorismate: step 5/5. In terms of biological role, the alpha subunit is responsible for the aldol cleavage of indoleglycerol phosphate to indole and glyceraldehyde 3-phosphate. This chain is Tryptophan synthase alpha chain, found in Xylella fastidiosa (strain M23).